A 55-amino-acid polypeptide reads, in one-letter code: Large ribosomal subunit protein bL33 (55 aa).

This sequence belongs to the bacterial ribosomal protein bL33 family.

This chain is Large ribosomal subunit protein bL33, found in Mycobacterium leprae (strain Br4923).